We begin with the raw amino-acid sequence, 425 residues long: UDP-N-acetylglucosamine 1-carboxyvinyltransferase (425 aa).

Lys-22–Asn-23 contributes to the phosphoenolpyruvate binding site. Residue Arg-93 participates in UDP-N-acetyl-alpha-D-glucosamine binding. The active-site Proton donor is Asp-117. 2 residues coordinate UDP-N-acetyl-alpha-D-glucosamine: Asp-312 and Met-334.

Belongs to the EPSP synthase family. MurA subfamily.

The protein resides in the cytoplasm. It catalyses the reaction phosphoenolpyruvate + UDP-N-acetyl-alpha-D-glucosamine = UDP-N-acetyl-3-O-(1-carboxyvinyl)-alpha-D-glucosamine + phosphate. Its pathway is cell wall biogenesis; peptidoglycan biosynthesis. In terms of biological role, cell wall formation. Adds enolpyruvyl to UDP-N-acetylglucosamine. This chain is UDP-N-acetylglucosamine 1-carboxyvinyltransferase, found in Treponema pallidum (strain Nichols).